Here is a 148-residue protein sequence, read N- to C-terminus: MKVIFLKDVKGKGKKGETKNVADGYANNFLIKNGYAVEASNAALSTLSAQKKKEDKLAAEELAEAKALKEKMEKLTVELKAKSGEGGRLFGSITSKQIAQTLEKTHGIKIDKRKMDLPEAIRALGHTKVPVKLHHEVTATLDVHVSEE.

Belongs to the bacterial ribosomal protein bL9 family.

In terms of biological role, binds to the 23S rRNA. The chain is Large ribosomal subunit protein bL9 from Listeria welshimeri serovar 6b (strain ATCC 35897 / DSM 20650 / CCUG 15529 / CIP 8149 / NCTC 11857 / SLCC 5334 / V8).